The primary structure comprises 184 residues: Orotate phosphoribosyltransferase (184 aa).

Residues Arg99, Lys100, Lys103, His105, and 125-133 contribute to the 5-phospho-alpha-D-ribose 1-diphosphate site; that span reads EDTTTTGNS. Orotate is bound by residues Thr129 and Arg157.

It belongs to the purine/pyrimidine phosphoribosyltransferase family. PyrE subfamily. In terms of assembly, homodimer. It depends on Mg(2+) as a cofactor.

It carries out the reaction orotidine 5'-phosphate + diphosphate = orotate + 5-phospho-alpha-D-ribose 1-diphosphate. The protein operates within pyrimidine metabolism; UMP biosynthesis via de novo pathway; UMP from orotate: step 1/2. Functionally, catalyzes the transfer of a ribosyl phosphate group from 5-phosphoribose 1-diphosphate to orotate, leading to the formation of orotidine monophosphate (OMP). This is Orotate phosphoribosyltransferase from Corynebacterium glutamicum (strain ATCC 13032 / DSM 20300 / JCM 1318 / BCRC 11384 / CCUG 27702 / LMG 3730 / NBRC 12168 / NCIMB 10025 / NRRL B-2784 / 534).